Consider the following 60-residue polypeptide: Large ribosomal subunit protein bL32 (60 aa).

Residues 1–28 are disordered; that stretch reads MAVQQNKKSRSARDMRRSHDALEASTLS. Positions 11–22 are enriched in basic and acidic residues; the sequence is SARDMRRSHDAL.

It belongs to the bacterial ribosomal protein bL32 family.

The sequence is that of Large ribosomal subunit protein bL32 from Pseudomonas savastanoi pv. phaseolicola (strain 1448A / Race 6) (Pseudomonas syringae pv. phaseolicola (strain 1448A / Race 6)).